A 285-amino-acid polypeptide reads, in one-letter code: MQDQQQVIHKAQPWHGKVGLIYGQRQGKTEMQRCFTQAPFRIQRPFYPEGNRVCHTVLLHTAGGIVGGDRLSLDLELKPESHVFLTTAAANKIYRTNGETAQQDGIIHQAPGSILEYFPQEMIIFDGAEYHQSLRVNLAPGAVWCGWEVLRFGRTARGEKFISGNWRGLTEIWQDDELLWGDRQWLPGHPEVFAAWNGLNNQPVVGSLALVGLEISEAQMAELRQTMATIQQGLGGITQLPKGVLCRYRGPSSTEVKRWFISLWQNWRSLYSPQPPTLSRVWQTY.

Belongs to the UreD family. In terms of assembly, ureD, UreF and UreG form a complex that acts as a GTP-hydrolysis-dependent molecular chaperone, activating the urease apoprotein by helping to assemble the nickel containing metallocenter of UreC. The UreE protein probably delivers the nickel.

The protein resides in the cytoplasm. Its function is as follows. Required for maturation of urease via the functional incorporation of the urease nickel metallocenter. In Picosynechococcus sp. (strain ATCC 27264 / PCC 7002 / PR-6) (Agmenellum quadruplicatum), this protein is Urease accessory protein UreD.